A 456-amino-acid chain; its full sequence is Glutamyl-tRNA(Gln) amidotransferase subunit A (456 aa).

Active-site charge relay system residues include K74 and S149. The Acyl-ester intermediate role is filled by S173.

This sequence belongs to the amidase family. GatA subfamily. As to quaternary structure, heterotrimer of A, B and C subunits.

The enzyme catalyses L-glutamyl-tRNA(Gln) + L-glutamine + ATP + H2O = L-glutaminyl-tRNA(Gln) + L-glutamate + ADP + phosphate + H(+). In terms of biological role, allows the formation of correctly charged Gln-tRNA(Gln) through the transamidation of misacylated Glu-tRNA(Gln) in organisms which lack glutaminyl-tRNA synthetase. The reaction takes place in the presence of glutamine and ATP through an activated gamma-phospho-Glu-tRNA(Gln). The sequence is that of Glutamyl-tRNA(Gln) amidotransferase subunit A from Methanobrevibacter smithii (strain ATCC 35061 / DSM 861 / OCM 144 / PS).